The chain runs to 246 residues: Deoxycytidylate 5-hydroxymethyltransferase (246 aa).

Cys148 is a catalytic residue.

Belongs to the thymidylate synthase family.

The enzyme catalyses dCMP + (6R)-5,10-methylene-5,6,7,8-tetrahydrofolate + H2O = 5-hydroxymethyl-dCMP + (6S)-5,6,7,8-tetrahydrofolate. The protein is Deoxycytidylate 5-hydroxymethyltransferase (42) of Enterobacteria phage T6 (Bacteriophage T6).